The following is a 163-amino-acid chain: Bacterial ISG15-like ubiquitin-like protein BilA (163 aa).

Ubiquitin-like BIL-type domains follow at residues 4–80 (LVVF…RCKR) and 81–163 (IRAT…RIEG). A Glycyl lysine isopeptide (Gly-Lys) (interchain with K-? in central tail fiber acceptor protein) cross-link involves residue Gly163.

Component of the Bil (bacterial ISG15-like) antiviral defense system, composed of BilA, BilB, BilC and BilD. The Bil system specifically conjugates a ubiquitin-like moiety (bilA) to the bacteriophage central tail fiber (CTF, or tip attachment protein J) via reactions involving E1 (bilD) and E2 (bilB). Modifies CTF of phage SECphi27 and SECphi4, which probably interferes with assembly of the phage tail. Also modifies T5 baseplate hub protein pb3 (gene D16), but not gp27 of phage T6 (Bil defends against T6). Bil-encoding bacteria produce mostly defective phage SECphi27, many of which have phage assembly defects, including no tails. SECphi27 phage progeny produced in E.coli with the Bil system inject less DNA into naive host cells, maybe because the phage are less able to adsorb and inject their DNA into host cells. Functionally, expression of the Bil system in E.coli (strain MG1655) confers about 100-fold resistance to phage SECphi27, SECphi18, SECphi6, SECphi4 and T5, but not to SECphi17. When cells expressing the Bil system are infected by phage SECphi27 at low multiplicity of infection (0.03 MOI) the culture survives, at 3.0 MOI the culture collapses at the same time as cells without the Bil system. The polypeptide is Bacterial ISG15-like ubiquitin-like protein BilA (Collimonas sp. (strain OK412)).